The primary structure comprises 157 residues: Probable succinate transporter subunit YjjB (157 aa).

A run of 4 helical transmembrane segments spans residues 10-30 (LAQDMALAAIPAVGFAMVFNV), 55-75 (AGFNIEWATFLAALLVGSIGI), 87-107 (IFTVAAVIPMFPGISAYTAMI), and 129-149 (FLKASSIVGALSIGLSIPGLW).

The protein belongs to the ThrE exporter (TC 2.A.79) family. In terms of assembly, the transporter is composed of YjjB and YjjP.

It localises to the cell inner membrane. Functionally, involved in succinate export with YjjP. Both proteins are required for export. Participates in succinate export, but also in the export of other dicarboxylates, such as fumarate and malate. Contributes to succinate production under both aerobic and anaerobic conditions, and increases fumarate and malate production during anaerobic succinate production. The chain is Probable succinate transporter subunit YjjB from Klebsiella aerogenes (strain ATCC 13048 / DSM 30053 / CCUG 1429 / JCM 1235 / KCTC 2190 / NBRC 13534 / NCIMB 10102 / NCTC 10006 / CDC 819-56) (Enterobacter aerogenes).